The following is a 341-amino-acid chain: tRNA N6-adenosine threonylcarbamoyltransferase (341 aa).

Fe cation-binding residues include His-120 and His-124. Residues Val-142–Gly-146, Asp-175, Gly-188, Asp-192, and Asn-281 each bind substrate. Asp-310 is a Fe cation binding site.

It belongs to the KAE1 / TsaD family. Requires Fe(2+) as cofactor.

It localises to the cytoplasm. It carries out the reaction L-threonylcarbamoyladenylate + adenosine(37) in tRNA = N(6)-L-threonylcarbamoyladenosine(37) in tRNA + AMP + H(+). Its function is as follows. Required for the formation of a threonylcarbamoyl group on adenosine at position 37 (t(6)A37) in tRNAs that read codons beginning with adenine. Is involved in the transfer of the threonylcarbamoyl moiety of threonylcarbamoyl-AMP (TC-AMP) to the N6 group of A37, together with TsaE and TsaB. TsaD likely plays a direct catalytic role in this reaction. The sequence is that of tRNA N6-adenosine threonylcarbamoyltransferase from Anoxybacillus flavithermus (strain DSM 21510 / WK1).